Here is a 92-residue protein sequence, read N- to C-terminus: Small ribosomal subunit protein uS19 (92 aa).

This sequence belongs to the universal ribosomal protein uS19 family.

Functionally, protein S19 forms a complex with S13 that binds strongly to the 16S ribosomal RNA. This is Small ribosomal subunit protein uS19 from Desulfosudis oleivorans (strain DSM 6200 / JCM 39069 / Hxd3) (Desulfococcus oleovorans).